The following is a 326-amino-acid chain: Thiamine thiazole synthase (326 aa).

Residues Cys-87, 108–109 (EA), Gly-116, and Val-181 each bind substrate. At Cys-215 the chain carries 2,3-didehydroalanine (Cys). Residues Asp-217, His-232, Met-284, and 294–296 (RMG) each bind substrate.

Belongs to the THI4 family. In terms of assembly, homooctamer. It depends on Fe cation as a cofactor. In terms of processing, during the catalytic reaction, a sulfide is transferred from Cys-215 to a reaction intermediate, generating a dehydroalanine residue.

It is found in the cytoplasm. It localises to the nucleus. The enzyme catalyses [ADP-thiazole synthase]-L-cysteine + glycine + NAD(+) = [ADP-thiazole synthase]-dehydroalanine + ADP-5-ethyl-4-methylthiazole-2-carboxylate + nicotinamide + 3 H2O + 2 H(+). Its function is as follows. Involved in biosynthesis of the thiamine precursor thiazole. Catalyzes the conversion of NAD and glycine to adenosine diphosphate 5-(2-hydroxyethyl)-4-methylthiazole-2-carboxylic acid (ADT), an adenylated thiazole intermediate. The reaction includes an iron-dependent sulfide transfer from a conserved cysteine residue of the protein to a thiazole intermediate. The enzyme can only undergo a single turnover, which suggests it is a suicide enzyme. May have additional roles in adaptation to various stress conditions and in DNA damage tolerance. In Sclerotinia sclerotiorum (strain ATCC 18683 / 1980 / Ss-1) (White mold), this protein is Thiamine thiazole synthase.